Reading from the N-terminus, the 1038-residue chain is Kinesin-like protein KIN-5B (1038 aa).

The segment at 1-63 (MAQTPNPSRR…GGGGGGGSEM (63 aa)) is disordered. The span at 24–34 (RPERRQLELRW) shows a compositional bias: basic and acidic residues. The segment covering 49–61 (GLTGGGGGGGGGS) has biased composition (gly residues). In terms of domain architecture, Kinesin motor spans 69–410 (NVQVVLRCRP…LDYAYRAKSI (342 aa)). 154 to 161 (GQTGTGKT) provides a ligand contact to ATP. Positions 453 to 502 (QERFALEEAEKKTMRDKIEYLETQNKELKMNIESCKKEYLDLEEAHSRAN) form a coiled coil. The interval 1013 to 1038 (DKGKRYVDQGTRTPRSPLMPVNHYNK) is disordered.

This sequence belongs to the TRAFAC class myosin-kinesin ATPase superfamily. Kinesin family. KIN-5/BimC subfamily.

It localises to the cytoplasm. The protein resides in the cytoskeleton. It is found in the spindle. Responsible for microtubule translocation. May be important for the organization of phragmoplast-specific arrays of microtubules. Plays an essential role in stabilizing the mitotic spindle. Required during mitotic cytokinesis. This Oryza sativa subsp. japonica (Rice) protein is Kinesin-like protein KIN-5B.